The chain runs to 420 residues: Annetocin receptor (420 aa).

Topologically, residues 1 to 54 (MEMDDDEAILLDDIYALASTPNQTIVTSSFPQTVSPGFLARRNEALAMVEVAVQ) are extracellular. Residue asparagine 22 is glycosylated (N-linked (GlcNAc...) asparagine). A helical membrane pass occupies residues 55-75 (STILILTVVGNAAVLAMIVSL). The Cytoplasmic segment spans residues 76 to 83 (SRHKDLGR). Residues 84-104 (MYTMIGHLSCADLFVAIFNLL) form a helical membrane-spanning segment. The Extracellular segment spans residues 105-124 (PQLLWDVTHRFRGGRVLCKL). The cysteines at positions 122 and 201 are disulfide-linked. The chain crosses the membrane as a helical span at residues 125-145 (VKYVQVVAMYASAYVLMSTAV). The Cytoplasmic portion of the chain corresponds to 146 to 166 (DRYTAICHPMRSHTWTSTTAH). A helical transmembrane segment spans residues 167 to 187 (YLVIGAWVLALVFAVPQLVIF). The Extracellular portion of the chain corresponds to 188-212 (DYVEVVPGSGVYDCVDHFRPRWTLP). The chain crosses the membrane as a helical span at residues 213 to 233 (VYITWFALAVYVIPLVVLATI). Residues 234 to 328 (YLRICVVVWK…KTKTVKLTLT (95 aa)) are Cytoplasmic-facing. Residues 329 to 349 (VVISYLVCWAPFFVSHIWSAW) traverse the membrane as a helical segment. The Extracellular portion of the chain corresponds to 350-360 (DPHAPFEGTEM). The helical transmembrane segment at 361–381 (VITLLLGSLNSCINPWIYLAF) threads the bilayer. Over 382 to 420 (SDQLRRKVTQCCPRSWGQRPSTLSHDSTDFRSGSRPTHS) the chain is Cytoplasmic. A disordered region spans residues 397–420 (WGQRPSTLSHDSTDFRSGSRPTHS). Positions 399–420 (QRPSTLSHDSTDFRSGSRPTHS) are enriched in polar residues.

It belongs to the G-protein coupled receptor 1 family. Vasopressin/oxytocin receptor subfamily. Nephridia in clitellum region.

Its subcellular location is the cell membrane. Receptor for annetocin. Activation by annetocin may induce egg-laying behavior through calcium-dependent signaling. The chain is Annetocin receptor from Eisenia fetida (Red wiggler worm).